A 357-amino-acid chain; its full sequence is UDP-N-acetylglucosamine--N-acetylmuramyl-(pentapeptide) pyrophosphoryl-undecaprenol N-acetylglucosamine transferase (357 aa).

UDP-N-acetyl-alpha-D-glucosamine contacts are provided by residues 11 to 13 (TGG), Asn-123, Arg-159, Ser-187, Ile-241, 260 to 265 (ALTVAE), and Gln-286.

This sequence belongs to the glycosyltransferase 28 family. MurG subfamily.

It is found in the cell inner membrane. It catalyses the reaction di-trans,octa-cis-undecaprenyl diphospho-N-acetyl-alpha-D-muramoyl-L-alanyl-D-glutamyl-meso-2,6-diaminopimeloyl-D-alanyl-D-alanine + UDP-N-acetyl-alpha-D-glucosamine = di-trans,octa-cis-undecaprenyl diphospho-[N-acetyl-alpha-D-glucosaminyl-(1-&gt;4)]-N-acetyl-alpha-D-muramoyl-L-alanyl-D-glutamyl-meso-2,6-diaminopimeloyl-D-alanyl-D-alanine + UDP + H(+). It participates in cell wall biogenesis; peptidoglycan biosynthesis. Its function is as follows. Cell wall formation. Catalyzes the transfer of a GlcNAc subunit on undecaprenyl-pyrophosphoryl-MurNAc-pentapeptide (lipid intermediate I) to form undecaprenyl-pyrophosphoryl-MurNAc-(pentapeptide)GlcNAc (lipid intermediate II). In Aromatoleum aromaticum (strain DSM 19018 / LMG 30748 / EbN1) (Azoarcus sp. (strain EbN1)), this protein is UDP-N-acetylglucosamine--N-acetylmuramyl-(pentapeptide) pyrophosphoryl-undecaprenol N-acetylglucosamine transferase.